Reading from the N-terminus, the 304-residue chain is Homoserine kinase (304 aa).

92-102 is a binding site for ATP; that stretch reads PLARGLGSSAT.

The protein belongs to the GHMP kinase family. Homoserine kinase subfamily.

It is found in the cytoplasm. The catalysed reaction is L-homoserine + ATP = O-phospho-L-homoserine + ADP + H(+). It participates in amino-acid biosynthesis; L-threonine biosynthesis; L-threonine from L-aspartate: step 4/5. Functionally, catalyzes the ATP-dependent phosphorylation of L-homoserine to L-homoserine phosphate. This chain is Homoserine kinase, found in Nostoc punctiforme (strain ATCC 29133 / PCC 73102).